A 194-amino-acid chain; its full sequence is Holliday junction branch migration complex subunit RuvA (194 aa).

The domain I stretch occupies residues 1–61 (MYDFLTGIIK…DNQISLYGFK (61 aa)). The segment at 62 to 139 (TVKERNLFQK…GDFSKNIAPM (78 aa)) is domain II. The interval 139–143 (MKNLL) is flexible linker. The segment at 144–194 (ENSAELDDALAALVALGFSSKEVNKINPKLASLGELTTDAYIQKGLKLLTK) is domain III.

It belongs to the RuvA family. Homotetramer. Forms an RuvA(8)-RuvB(12)-Holliday junction (HJ) complex. HJ DNA is sandwiched between 2 RuvA tetramers; dsDNA enters through RuvA and exits via RuvB. An RuvB hexamer assembles on each DNA strand where it exits the tetramer. Each RuvB hexamer is contacted by two RuvA subunits (via domain III) on 2 adjacent RuvB subunits; this complex drives branch migration. In the full resolvosome a probable DNA-RuvA(4)-RuvB(12)-RuvC(2) complex forms which resolves the HJ.

It is found in the cytoplasm. Functionally, the RuvA-RuvB-RuvC complex processes Holliday junction (HJ) DNA during genetic recombination and DNA repair, while the RuvA-RuvB complex plays an important role in the rescue of blocked DNA replication forks via replication fork reversal (RFR). RuvA specifically binds to HJ cruciform DNA, conferring on it an open structure. The RuvB hexamer acts as an ATP-dependent pump, pulling dsDNA into and through the RuvAB complex. HJ branch migration allows RuvC to scan DNA until it finds its consensus sequence, where it cleaves and resolves the cruciform DNA. The polypeptide is Holliday junction branch migration complex subunit RuvA (Oenococcus oeni (strain ATCC BAA-331 / PSU-1)).